Consider the following 467-residue polypeptide: Argininosuccinate lyase (467 aa).

Belongs to the lyase 1 family. Argininosuccinate lyase subfamily.

Its subcellular location is the cytoplasm. It carries out the reaction 2-(N(omega)-L-arginino)succinate = fumarate + L-arginine. The protein operates within amino-acid biosynthesis; L-arginine biosynthesis; L-arginine from L-ornithine and carbamoyl phosphate: step 3/3. In Nitrosococcus oceani (strain ATCC 19707 / BCRC 17464 / JCM 30415 / NCIMB 11848 / C-107), this protein is Argininosuccinate lyase.